The chain runs to 515 residues: Cytidine and dCMP deaminase domain-containing protein 1 (515 aa).

Polar residues-rich tracts occupy residues 1-11 (MKEAGQMQNLE) and 18-27 (SVSTQTGSMT). Disordered stretches follow at residues 1 to 27 (MKEA…GSMT) and 56 to 83 (RQKS…STDK). Positions 60-83 (QKNEEGKHGPLGDNEEMTRVSTDK) are enriched in basic and acidic residues. The region spanning 71–169 (GDNEEMTRVS…SLLTEASSSE (99 aa)) is the CMP/dCMP-type deaminase 1 domain. Zn(2+)-binding residues include H110, C135, and C138. Residues 272 to 284 (NLRQNMKDLILLL) carry the Nuclear export signal motif. The CMP/dCMP-type deaminase 2 domain occupies 318 to 483 (EIARHCMVQA…LNPSGAYGLE (166 aa)). H399 is a Zn(2+) binding site. E401 acts as the Proton donor in catalysis. Residues C427 and C430 each coordinate Zn(2+). A Bipartite nuclear localization signal motif is present at residues 489–511 (RRENGVLRPVPQKEEQHQDKKLC). Residues 494-515 (VLRPVPQKEEQHQDKKLCLGIH) are disordered.

The protein belongs to the cytidine and deoxycytidylate deaminase family. Requires Zn(2+) as cofactor.

The protein resides in the cytoplasm. It localises to the nucleus. The catalysed reaction is 2'-deoxycytidine + H2O + H(+) = 2'-deoxyuridine + NH4(+). The enzyme catalyses cytidine + H2O + H(+) = uridine + NH4(+). Catalyzes the deamination of cytidine and deoxycytidine into uridine and deoxyuridine, respectively. May play an important role in testicular development and spermatogenesis. This Pongo abelii (Sumatran orangutan) protein is Cytidine and dCMP deaminase domain-containing protein 1 (CDADC1).